The chain runs to 176 residues: Large ribosomal subunit protein uL6 (176 aa).

It belongs to the universal ribosomal protein uL6 family. In terms of assembly, part of the 50S ribosomal subunit.

This protein binds to the 23S rRNA, and is important in its secondary structure. It is located near the subunit interface in the base of the L7/L12 stalk, and near the tRNA binding site of the peptidyltransferase center. The polypeptide is Large ribosomal subunit protein uL6 (Methanothrix thermoacetophila (strain DSM 6194 / JCM 14653 / NBRC 101360 / PT) (Methanosaeta thermophila)).